The sequence spans 265 residues: Undecaprenyl-diphosphatase (265 aa).

A run of 7 helical transmembrane segments spans residues 42–62 (AATF…VLYW), 82–102 (GIML…AAHS), 108–128 (LFTP…MLLV), 143–163 (MSPA…WPGF), 181–201 (GLAA…ATGY), 221–241 (GFVV…ALVG), and 248–264 (FAWY…YFMA).

It belongs to the UppP family.

The protein localises to the cell inner membrane. It catalyses the reaction di-trans,octa-cis-undecaprenyl diphosphate + H2O = di-trans,octa-cis-undecaprenyl phosphate + phosphate + H(+). Functionally, catalyzes the dephosphorylation of undecaprenyl diphosphate (UPP). Confers resistance to bacitracin. The protein is Undecaprenyl-diphosphatase of Nitratidesulfovibrio vulgaris (strain DP4) (Desulfovibrio vulgaris).